The following is a 366-amino-acid chain: Anhydro-N-acetylmuramic acid kinase (366 aa).

Residue 10 to 17 coordinates ATP; that stretch reads GTSMDGID.

This sequence belongs to the anhydro-N-acetylmuramic acid kinase family.

It catalyses the reaction 1,6-anhydro-N-acetyl-beta-muramate + ATP + H2O = N-acetyl-D-muramate 6-phosphate + ADP + H(+). It functions in the pathway amino-sugar metabolism; 1,6-anhydro-N-acetylmuramate degradation. It participates in cell wall biogenesis; peptidoglycan recycling. Catalyzes the specific phosphorylation of 1,6-anhydro-N-acetylmuramic acid (anhMurNAc) with the simultaneous cleavage of the 1,6-anhydro ring, generating MurNAc-6-P. Is required for the utilization of anhMurNAc either imported from the medium or derived from its own cell wall murein, and thus plays a role in cell wall recycling. This chain is Anhydro-N-acetylmuramic acid kinase, found in Legionella pneumophila (strain Lens).